We begin with the raw amino-acid sequence, 225 residues long: MEKVLKNDWGPLLAPEFEKEYYRKLADFLKEEYSTHVVYPKKEDIFNALEYTSYENTKVVILGQDPYHGPNQAHGLSFSVQPGIKTPPSLLNMYKELRDEYGYDIPNNGYLVKWAEQGVLLLNTVLTVRQGEANSHKGKGWEHFTDRVIELLNEREKPVIFILWGRHAQAKKKLITNTKHHIIESVHPSPLSARRGFFGSKPYSKVNTILANMGEREIDWEIPNL.

The active-site Proton acceptor is the Asp65.

This sequence belongs to the uracil-DNA glycosylase (UDG) superfamily. UNG family.

Its subcellular location is the cytoplasm. It carries out the reaction Hydrolyzes single-stranded DNA or mismatched double-stranded DNA and polynucleotides, releasing free uracil.. Its function is as follows. Excises uracil residues from the DNA which can arise as a result of misincorporation of dUMP residues by DNA polymerase or due to deamination of cytosine. In Bacillus cereus (strain ZK / E33L), this protein is Uracil-DNA glycosylase.